The primary structure comprises 692 residues: Elongation factor G (692 aa).

Residues 8–283 (DHVRNIGIMA…AVVDYFPSPS (276 aa)) enclose the tr-type G domain. GTP contacts are provided by residues 17 to 24 (AHIDAGKT), 81 to 85 (DTPGH), and 135 to 138 (NKMD).

It belongs to the TRAFAC class translation factor GTPase superfamily. Classic translation factor GTPase family. EF-G/EF-2 subfamily.

It localises to the cytoplasm. Its function is as follows. Catalyzes the GTP-dependent ribosomal translocation step during translation elongation. During this step, the ribosome changes from the pre-translocational (PRE) to the post-translocational (POST) state as the newly formed A-site-bound peptidyl-tRNA and P-site-bound deacylated tRNA move to the P and E sites, respectively. Catalyzes the coordinated movement of the two tRNA molecules, the mRNA and conformational changes in the ribosome. This Magnetococcus marinus (strain ATCC BAA-1437 / JCM 17883 / MC-1) protein is Elongation factor G.